Consider the following 462-residue polypeptide: Cysteine--tRNA ligase (462 aa).

Cys-28 provides a ligand contact to Zn(2+). Residues Ile-30 to His-40 carry the 'HIGH' region motif. Positions 210, 235, and 239 each coordinate Zn(2+). The short motif at Lys-267–Ser-271 is the 'KMSKS' region element. Lys-270 is an ATP binding site.

The protein belongs to the class-I aminoacyl-tRNA synthetase family. Monomer. The cofactor is Zn(2+).

Its subcellular location is the cytoplasm. The catalysed reaction is tRNA(Cys) + L-cysteine + ATP = L-cysteinyl-tRNA(Cys) + AMP + diphosphate. This Erwinia tasmaniensis (strain DSM 17950 / CFBP 7177 / CIP 109463 / NCPPB 4357 / Et1/99) protein is Cysteine--tRNA ligase.